Consider the following 345-residue polypeptide: Nuclear distribution protein nudE-like 1-A (345 aa).

The stretch at 19-190 (WRELSKRLKQ…LAVRERQTDG (172 aa)) forms a coiled coil. A compositionally biased stretch (basic and acidic residues) spans 182–192 (AVRERQTDGTR). 2 disordered regions span residues 182 to 206 (AVRERQTDGTRKSAPSSPTLDCDKT) and 326 to 345 (PPGVLGSRPPSPPGMLPLSV). Pro residues predominate over residues 334 to 345 (PPSPPGMLPLSV).

This sequence belongs to the nudE family. Post-translationally, phosphorylated in mitosis.

Its subcellular location is the cytoplasm. It is found in the cytoskeleton. It localises to the microtubule organizing center. The protein resides in the centrosome. The protein localises to the spindle. Required for organization of the cellular microtubule array and microtubule anchoring at the centrosome. Positively regulates the activity of the minus-end directed microtubule motor protein dynein. May enhance dynein-mediated microtubule sliding by targeting dynein to the microtubule plus end. Positively regulates lysosome peripheral distribution and ruffled border formation in osteoclasts. The protein is Nuclear distribution protein nudE-like 1-A (ndel1-a) of Xenopus laevis (African clawed frog).